The sequence spans 199 residues: Protein GrpE (199 aa).

This sequence belongs to the GrpE family. Homodimer.

The protein localises to the cytoplasm. Its function is as follows. Participates actively in the response to hyperosmotic and heat shock by preventing the aggregation of stress-denatured proteins, in association with DnaK and GrpE. It is the nucleotide exchange factor for DnaK and may function as a thermosensor. Unfolded proteins bind initially to DnaJ; upon interaction with the DnaJ-bound protein, DnaK hydrolyzes its bound ATP, resulting in the formation of a stable complex. GrpE releases ADP from DnaK; ATP binding to DnaK triggers the release of the substrate protein, thus completing the reaction cycle. Several rounds of ATP-dependent interactions between DnaJ, DnaK and GrpE are required for fully efficient folding. In Fusobacterium nucleatum subsp. nucleatum (strain ATCC 25586 / DSM 15643 / BCRC 10681 / CIP 101130 / JCM 8532 / KCTC 2640 / LMG 13131 / VPI 4355), this protein is Protein GrpE.